We begin with the raw amino-acid sequence, 192 residues long: TDGHQAAAPQVGDPQAGEAKANGVCLACHGPQGNSLVPIWPKLAGQHPEYIVKQLMDFKQRRANEQMTPMAMPLTDQEVLDLAAYYATQPKTPGAADPELASKGESLYRWGNPETGVPACSGCHGPAGGAGQSLAKFPRLSAQHADYTKQTLEHFRGALRANDPNGMMRGAAARLSDQEIAAVSQYLQGLSQ.

Cytochrome c domains lie at 12 to 90 (GDPQ…ATQP) and 99 to 191 (ELAS…QGLS). Residues cysteine 25, cysteine 28, histidine 29, cysteine 120, cysteine 123, and histidine 124 each coordinate heme c.

Post-translationally, binds 2 heme c groups covalently per subunit.

It is found in the periplasm. Functionally, diheme, high potential cytochrome c believed to be an intermediate electron donor in an anaerobic electron transport chain. This Thiocapsa roseopersicina protein is Cytochrome c4.